The following is a 183-amino-acid chain: ATP synthase subunit delta (183 aa).

This sequence belongs to the ATPase delta chain family. F-type ATPases have 2 components, F(1) - the catalytic core - and F(0) - the membrane proton channel. F(1) has five subunits: alpha(3), beta(3), gamma(1), delta(1), epsilon(1). F(0) has three main subunits: a(1), b(2) and c(10-14). The alpha and beta chains form an alternating ring which encloses part of the gamma chain. F(1) is attached to F(0) by a central stalk formed by the gamma and epsilon chains, while a peripheral stalk is formed by the delta and b chains.

It is found in the cell inner membrane. In terms of biological role, f(1)F(0) ATP synthase produces ATP from ADP in the presence of a proton or sodium gradient. F-type ATPases consist of two structural domains, F(1) containing the extramembraneous catalytic core and F(0) containing the membrane proton channel, linked together by a central stalk and a peripheral stalk. During catalysis, ATP synthesis in the catalytic domain of F(1) is coupled via a rotary mechanism of the central stalk subunits to proton translocation. Functionally, this protein is part of the stalk that links CF(0) to CF(1). It either transmits conformational changes from CF(0) to CF(1) or is implicated in proton conduction. The polypeptide is ATP synthase subunit delta (Thermotoga maritima (strain ATCC 43589 / DSM 3109 / JCM 10099 / NBRC 100826 / MSB8)).